Reading from the N-terminus, the 357-residue chain is Mitogen-activated protein kinase kinase SIPKK (357 aa).

Residues 70-330 (FEAVKVIGKG…ANELMRHPFI (261 aa)) enclose the Protein kinase domain. ATP contacts are provided by residues 76-84 (IGKGNGGIV) and Lys99. Asp192 (proton acceptor) is an active-site residue.

This sequence belongs to the protein kinase superfamily. STE Ser/Thr protein kinase family. MAP kinase kinase subfamily. As to quaternary structure, interacts with SIPK.

The catalysed reaction is L-tyrosyl-[protein] + ATP = O-phospho-L-tyrosyl-[protein] + ADP + H(+). The enzyme catalyses L-seryl-[protein] + ATP = O-phospho-L-seryl-[protein] + ADP + H(+). It carries out the reaction L-threonyl-[protein] + ATP = O-phospho-L-threonyl-[protein] + ADP + H(+). Phosphorylates myelin basic protein (MBP) in vitro. May be involved in disease resistance. This Nicotiana tabacum (Common tobacco) protein is Mitogen-activated protein kinase kinase SIPKK.